The chain runs to 414 residues: NADH-ubiquinone oxidoreductase chain 4 (414 aa).

Transmembrane regions (helical) follow at residues 18–38 (LVQLYIVYEASLIPMVIMIGV), 47–67 (IAAFQILIYTLIGSIFMLMSI), 96–116 (IIFIGFFIGFAVKIPIAPLHL), 126–146 (PTAGSVLLAGILLKLGGYGYI), 160–180 (YFPIIGGICLISILYTGIATL), 188–208 (IVAYSSISHMNVIVLGLFSGV), 216–236 (IILMIGHGIVSGGLFLCIGVI), 254–274 (MMPIMAILFFLLVLGNIAFPI), 293–313 (IIIAFFSALSMIITAIYSFWL), and 375–395 (VNIFEFVSIGLMVILMLIVGM).

This sequence belongs to the complex I subunit 4 family.

Its subcellular location is the mitochondrion membrane. It catalyses the reaction a ubiquinone + NADH + 5 H(+)(in) = a ubiquinol + NAD(+) + 4 H(+)(out). Core subunit of the mitochondrial membrane respiratory chain NADH dehydrogenase (Complex I) that is believed to belong to the minimal assembly required for catalysis. Complex I functions in the transfer of electrons from NADH to the respiratory chain. The immediate electron acceptor for the enzyme is believed to be ubiquinone. The sequence is that of NADH-ubiquinone oxidoreductase chain 4 (nad4) from Dictyostelium citrinum (Slime mold).